We begin with the raw amino-acid sequence, 358 residues long: Variant-surface-glycoprotein phospholipase C (358 aa).

The PI-PLC X-box domain maps to 25 to 198 (IGQVYMVGAH…STRRIFLVVR (174 aa)).

In terms of assembly, monomer. Post-translationally, the N-terminus is blocked.

Its subcellular location is the membrane. It carries out the reaction a 6-(alpha-D-glucosaminyl)-1-(1,2-diacyl-sn-glycero-3-phospho)-1D-myo-inositol = 6-(alpha-D-glucosaminyl)-1D-myo-inositol 1,2-cyclic phosphate + a 1,2-diacyl-sn-glycerol. By hydrolysis of the attached glycolipid, releases soluble variant surface glycoprotein containing phosphoinositol from the cell wall of T.brucei after cell lysis. It also cleaves similar membrane anchors on some mammalian proteins. VSG lipase may play a role in processes such as parasite differentiation or antigenic variation. This is Variant-surface-glycoprotein phospholipase C from Trypanosoma brucei brucei.